A 298-amino-acid polypeptide reads, in one-letter code: tRNA dimethylallyltransferase (298 aa).

Position 10–17 (10–17 (GATATGKS)) interacts with ATP. Residue 12 to 17 (TATGKS) participates in substrate binding. The segment at 35–38 (DSRQ) is interaction with substrate tRNA.

This sequence belongs to the IPP transferase family. Monomer. The cofactor is Mg(2+).

The enzyme catalyses adenosine(37) in tRNA + dimethylallyl diphosphate = N(6)-dimethylallyladenosine(37) in tRNA + diphosphate. Functionally, catalyzes the transfer of a dimethylallyl group onto the adenine at position 37 in tRNAs that read codons beginning with uridine, leading to the formation of N6-(dimethylallyl)adenosine (i(6)A). The polypeptide is tRNA dimethylallyltransferase (Picosynechococcus sp. (strain ATCC 27264 / PCC 7002 / PR-6) (Agmenellum quadruplicatum)).